Reading from the N-terminus, the 235-residue chain is MAQADPADRDRLIVALDVPSVDAAKAMIDKLGDSVGFYKIGYQLAYAGGLALVPQLVDAGKKVFVDLKLHDIGNTVARGVESLTALGATFLTVHAYPQTMRAAVEARGTSGMKILAVTVLTSYDDADLTDAGYALGVRDLVEARARQALAIGVDGLVCSPEEAAHLRGIIGPRMALVTPGIRPAGSAAGDQKRIMTPARAIAAGASHLVVGRPVMEAADPKQAAEAIVAEIAQAK.

Residues Asp-17, Lys-39, 66–75 (DLKLHDIGNT), Thr-121, Arg-182, Gln-191, Gly-211, and Arg-212 contribute to the substrate site. The active-site Proton donor is Lys-68.

It belongs to the OMP decarboxylase family. Type 1 subfamily. As to quaternary structure, homodimer.

The enzyme catalyses orotidine 5'-phosphate + H(+) = UMP + CO2. Its pathway is pyrimidine metabolism; UMP biosynthesis via de novo pathway; UMP from orotate: step 2/2. Functionally, catalyzes the decarboxylation of orotidine 5'-monophosphate (OMP) to uridine 5'-monophosphate (UMP). This Rhodopseudomonas palustris (strain HaA2) protein is Orotidine 5'-phosphate decarboxylase.